The primary structure comprises 284 residues: Bifunctional protein FolD 2 (284 aa).

NADP(+) is bound by residues 166–168 (GAS) and I232.

Belongs to the tetrahydrofolate dehydrogenase/cyclohydrolase family. Homodimer.

The enzyme catalyses (6R)-5,10-methylene-5,6,7,8-tetrahydrofolate + NADP(+) = (6R)-5,10-methenyltetrahydrofolate + NADPH. The catalysed reaction is (6R)-5,10-methenyltetrahydrofolate + H2O = (6R)-10-formyltetrahydrofolate + H(+). It participates in one-carbon metabolism; tetrahydrofolate interconversion. Its function is as follows. Catalyzes the oxidation of 5,10-methylenetetrahydrofolate to 5,10-methenyltetrahydrofolate and then the hydrolysis of 5,10-methenyltetrahydrofolate to 10-formyltetrahydrofolate. This is Bifunctional protein FolD 2 from Colwellia psychrerythraea (strain 34H / ATCC BAA-681) (Vibrio psychroerythus).